Reading from the N-terminus, the 490-residue chain is MKPKLMYQELKVPAEEPANELPMNEIEAWKAAEKKARWVLLVLILAVVGFGALMTQLFLWEYGDLHLFGPNQRPAPCYDPCEAVLVESIPEGLDFPNASTGNPSTSQAWLGLLAGAHSSLDIASFYWTLTNNDTHTQEPSAQQGEEVLRQLQTLAPKGVNVRIAVSKPSGPQPQADLQALLQSGAQVRMVDMQKLTHGVLHTKFWVVDQTHFYLGSANMDWRSLTQVKELGVVMYNCSCLARDLTKIFEAYWFLGQAGSSIPSTWPRFYDTRYNQETPMEICLNGTPALAYLASAPPPLCPSGRTPDLKALLNVVDNARSFIYVAVMNYLPTLEFSHPHRFWPAIDDGLRRATYERGVKVRLLISCWGHSEPSMRAFLLSLAALRDNHTHSDIQVKLFVVPADEAQARIPYARVNHNKYMVTERATYIGTSNWSGNYFTETAGTSLLVTQNGRGGLRSQLEAIFLRDWDSPYSHDLDTSADSVGNACRLL.

Residues 1–38 lie on the Cytoplasmic side of the membrane; the sequence is MKPKLMYQELKVPAEEPANELPMNEIEAWKAAEKKARW. A helical; Signal-anchor for type II membrane protein transmembrane segment spans residues 39–59; it reads VLLVLILAVVGFGALMTQLFL. The Lumenal segment spans residues 60–490; it reads WEYGDLHLFG…DSVGNACRLL (431 aa). Intrachain disulfides connect C77-C239 and C81-C237. Residues N97 and N132 are each glycosylated (N-linked (GlcNAc...) asparagine). One can recognise a PLD phosphodiesterase 1 domain in the interval 196–223; sequence THGVLHTKFWVVDQTHFYLGSANMDWRS. Residues H201, K203, and D208 contribute to the active site. H201 (proton donor) is an active-site residue. Positions 201 and 203 each coordinate phosphate. N218 contacts phosphate. N-linked (GlcNAc...) asparagine glycans are attached at residues N236, N284, and N387. An intrachain disulfide couples C366 to C487. One can recognise a PLD phosphodiesterase 2 domain in the interval 411–437; that stretch reads YARVNHNKYMVTERATYIGTSNWSGNY. Residue H416 participates in phosphate binding. The active-site Nucleophile is H416. F438 lines the Mg(2+) pocket.

The protein belongs to the phospholipase D family. In terms of assembly, homodimer. Interacts with APP. Post-translationally, N-glycosylated. Proteolytically processed to a soluble active form that is stable within endosomes and lysosomes. During transport through the secretory pathway becomes proteolysed by cysteine proteases, thereby releasing a stable soluble lysosomal lumenal polypeptide, whereas the transmembrane-bound fragment is rapidly degraded. Its transport route to lysosomes involves ubiquitination and the ESCRT complex. In terms of processing, ubiquitinated at N-terminus. Ubiquitination mediates sorting into lysosomes. In terms of tissue distribution, widely expressed. In the brain, high levels of expression are detected in the frontal, temporal and occipital cortices and hippocampus. Expressed at low level in corpus callosum. Expressed in plasmacytoid dendritic cells and monocytes (at protein level).

Its subcellular location is the endoplasmic reticulum membrane. The protein localises to the lysosome lumen. It is found in the early endosome membrane. It localises to the late endosome membrane. The protein resides in the golgi apparatus membrane. Its subcellular location is the endosome membrane. The catalysed reaction is Exonucleolytic cleavage in the 5'- to 3'-direction to yield nucleoside 3'-phosphates.. The enzyme catalyses a 5'-end 5'-dephospho-ribonucleotidyl-ribonucleotide-RNA + H2O = a ribonucleoside 3'-phosphate + a 5'-end dephospho-ribonucleoside-RNA + H(+). It catalyses the reaction a ribonucleoside 3'-phosphate-2'-3'-cyclophospho-GMP + H2O = a ribonucleoside 3'-phosphate + 2',3'-cyclophospho-GMP + H(+). It carries out the reaction a 5'-end 5'-dephospho-2'-deoxyribonucleotidyl-2'-deoxyribonucleotide in single-stranded DNA + H2O = a 5'-end dephospho-2'-deoxyribonucleoside in single-stranded DNA + a 2'-deoxyribonucleoside 3'-phosphate + H(+). The catalysed reaction is a 5'-end 5'-phospho-2'-deoxyribonucleotide in single-stranded DNA + H2O = a 5'-end 5'-dephospho-2'-deoxyribonucleotide in single-stranded DNA + phosphate. The enzyme catalyses a 3-lyso-sn-glycero-1-phospho-(3'-acyl-1'-sn-glycerol) + a 1-acyl-sn-glycerol = a 3-acyl-sn-glycero-1-phospho-(3'-acyl-1'-sn-glycerol) + glycerol. It catalyses the reaction 3-lyso-sn-glycero-1-phospho-(3'-(9Z-octadecenoyl)-1'-sn-glycerol) + 1-(9Z-octadecenoyl)-sn-glycerol = 3-(9Z-octadecenoyl)-sn-glycero-1-phospho-(3'-(9Z-octadecenoyl)-1'-sn-glycerol) + glycerol. With respect to regulation, the exonuclease activity toward ssDNA substrate is Ca(2+) and Mg(2+)-independent, but it is inhibited by Fe(2+), Cu(2+) and to a lesser extent Zn(2+) ions. Its function is as follows. 5'-&gt;3' exonuclease that hydrolyzes the phosphodiester bond of single-stranded DNA (ssDNA) and RNA molecules to form nucleoside 3'-monophosphates and 5'-end 5'-hydroxy deoxyribonucleotide/ribonucleotide fragments. Partially redundant with PLD4, can cleave all four nucleotides displaying higher efficiency for ssDNA and RNA fragments initiated with uridine and guanosine residues and lower efficiency for cytidine-initiated substrates. As a result, it does not always degrade polynucleotides to the single nucleotide level, it can stall at specific sites sparing certain fragments from exonucleolytic degradation. Processes self and pathogenic ssDNA and RNA molecules that reach the endolysosomal compartment via phagocytosis or autophagy and may serve as 'danger' signals for recognition by innate immune receptors such as toll-like receptors (TLRs). Degrades mitochondrial CpG-rich ssDNA fragments to prevent TLR9 activation and autoinflammatory response, but it can cleave viral RNA to generate ligands for TLR7 activation and initiate antiviral immune responses. In plasmacytoid dendritic cells, it cooperates with endonuclease RNASET2 to release 2',3'-cyclic guanosine monophosphate (2',3'-cGMP), a potent stimulatory ligand for TLR7. Produces 2',3'-cGMPs and cytidine-rich RNA fragments that occupy TLR7 ligand-binding pockets and trigger a signaling-competent state. Can exert polynucleotide phosphatase activity toward 5'-phosphorylated ssDNA substrates although at a slow rate. Transphosphatidylase that catalyzes the exchange with R to S stereo-inversion of the glycerol moiety between (S,R)-lysophosphatidylglycerol (LPG) and monoacylglycerol (MAG) substrates to yield (S,S)-bis(monoacylglycero)phosphate (BMP). Can synthesize a variety of (S,S)-BMPs representing the main phospholipid constituent of lysosomal intralumenal vesicle (ILV) membranes that bind acid hydrolases for lipid degradation. Regulates the homeostasis and interorganellar communication of the endolysosomal system with an overall impact on cellular removal of dysfunctional organelles via autophagy as well as proper protein and lipid turnover. May play a role in myotube formation in response to ER stress. The chain is 5'-3' exonuclease PLD3 from Homo sapiens (Human).